Reading from the N-terminus, the 218-residue chain is Large ribosomal subunit protein uL3 (218 aa).

Residues Lys-124–Ala-162 form a disordered region.

The protein belongs to the universal ribosomal protein uL3 family. In terms of assembly, part of the 50S ribosomal subunit. Forms a cluster with proteins L14 and L19.

One of the primary rRNA binding proteins, it binds directly near the 3'-end of the 23S rRNA, where it nucleates assembly of the 50S subunit. The chain is Large ribosomal subunit protein uL3 from Synechococcus sp. (strain CC9605).